A 292-amino-acid chain; its full sequence is 4-hydroxy-tetrahydrodipicolinate synthase (292 aa).

Pyruvate is bound at residue threonine 45. Tyrosine 133 serves as the catalytic Proton donor/acceptor. The active-site Schiff-base intermediate with substrate is the lysine 161. A pyruvate-binding site is contributed by isoleucine 203.

The protein belongs to the DapA family. Homotetramer; dimer of dimers.

The protein localises to the cytoplasm. The enzyme catalyses L-aspartate 4-semialdehyde + pyruvate = (2S,4S)-4-hydroxy-2,3,4,5-tetrahydrodipicolinate + H2O + H(+). The protein operates within amino-acid biosynthesis; L-lysine biosynthesis via DAP pathway; (S)-tetrahydrodipicolinate from L-aspartate: step 3/4. Functionally, catalyzes the condensation of (S)-aspartate-beta-semialdehyde [(S)-ASA] and pyruvate to 4-hydroxy-tetrahydrodipicolinate (HTPA). The polypeptide is 4-hydroxy-tetrahydrodipicolinate synthase (Cronobacter sakazakii (strain ATCC BAA-894) (Enterobacter sakazakii)).